We begin with the raw amino-acid sequence, 64 residues long: Large ribosomal subunit protein bL33 (64 aa).

Composition is skewed to basic and acidic residues over residues 16 to 25 (EARTSSDPKR) and 33 to 42 (TTEKNRRNTT). Residues 16–42 (EARTSSDPKRSNGVSRYTTEKNRRNTT) form a disordered region.

Belongs to the bacterial ribosomal protein bL33 family.

The sequence is that of Large ribosomal subunit protein bL33 from Prochlorococcus marinus (strain MIT 9301).